The primary structure comprises 83 residues: Small ribosomal subunit protein bS16 (83 aa).

This sequence belongs to the bacterial ribosomal protein bS16 family.

This Cupriavidus taiwanensis (strain DSM 17343 / BCRC 17206 / CCUG 44338 / CIP 107171 / LMG 19424 / R1) (Ralstonia taiwanensis (strain LMG 19424)) protein is Small ribosomal subunit protein bS16.